A 1589-amino-acid polypeptide reads, in one-letter code: Pentafunctional AROM polypeptide (1589 aa).

The interval M1 to N384 is 3-dehydroquinate synthase. NAD(+) is bound by residues D44–T46, E81–K84, G114–V116, and D119. R130 is a 7-phospho-2-dehydro-3-deoxy-D-arabino-heptonate binding site. T139 to T140 contributes to the NAD(+) binding site. Positions 146 and 152 each coordinate 7-phospho-2-dehydro-3-deoxy-D-arabino-heptonate. Residue K161 coordinates NAD(+). Residue N162 coordinates 7-phospho-2-dehydro-3-deoxy-D-arabino-heptonate. Residues F179 to T182 and N190 contribute to the NAD(+) site. E194 contacts Zn(2+). 7-phospho-2-dehydro-3-deoxy-D-arabino-heptonate is bound by residues E194–K197 and K250. E260 acts as the Proton acceptor; for 3-dehydroquinate synthase activity in catalysis. Residues R264 to N268 and H271 each bind 7-phospho-2-dehydro-3-deoxy-D-arabino-heptonate. Residue H271 coordinates Zn(2+). H275 (proton acceptor; for 3-dehydroquinate synthase activity) is an active-site residue. 7-phospho-2-dehydro-3-deoxy-D-arabino-heptonate-binding residues include H287 and K356. H287 contributes to the Zn(2+) binding site. The interval V397 to A841 is EPSP synthase. Residue C823 is the For EPSP synthase activity of the active site. Residues A861–S1052 form a shikimate kinase region. ATP is bound at residue G867 to T874. The tract at residues L1053–D1273 is 3-dehydroquinase. H1176 functions as the Proton acceptor; for 3-dehydroquinate dehydratase activity in the catalytic mechanism. The active-site Schiff-base intermediate with substrate; for 3-dehydroquinate dehydratase activity is K1204. Positions P1286–G1589 are shikimate dehydrogenase.

It in the N-terminal section; belongs to the sugar phosphate cyclases superfamily. Dehydroquinate synthase family. This sequence in the 2nd section; belongs to the EPSP synthase family. The protein in the 3rd section; belongs to the shikimate kinase family. In the 4th section; belongs to the type-I 3-dehydroquinase family. It in the C-terminal section; belongs to the shikimate dehydrogenase family. Homodimer. The cofactor is Zn(2+).

It is found in the cytoplasm. The catalysed reaction is 7-phospho-2-dehydro-3-deoxy-D-arabino-heptonate = 3-dehydroquinate + phosphate. It catalyses the reaction 3-dehydroquinate = 3-dehydroshikimate + H2O. It carries out the reaction shikimate + NADP(+) = 3-dehydroshikimate + NADPH + H(+). The enzyme catalyses shikimate + ATP = 3-phosphoshikimate + ADP + H(+). The catalysed reaction is 3-phosphoshikimate + phosphoenolpyruvate = 5-O-(1-carboxyvinyl)-3-phosphoshikimate + phosphate. Its pathway is metabolic intermediate biosynthesis; chorismate biosynthesis; chorismate from D-erythrose 4-phosphate and phosphoenolpyruvate: step 2/7. It participates in metabolic intermediate biosynthesis; chorismate biosynthesis; chorismate from D-erythrose 4-phosphate and phosphoenolpyruvate: step 3/7. It functions in the pathway metabolic intermediate biosynthesis; chorismate biosynthesis; chorismate from D-erythrose 4-phosphate and phosphoenolpyruvate: step 4/7. The protein operates within metabolic intermediate biosynthesis; chorismate biosynthesis; chorismate from D-erythrose 4-phosphate and phosphoenolpyruvate: step 5/7. Its pathway is metabolic intermediate biosynthesis; chorismate biosynthesis; chorismate from D-erythrose 4-phosphate and phosphoenolpyruvate: step 6/7. The AROM polypeptide catalyzes 5 consecutive enzymatic reactions in prechorismate polyaromatic amino acid biosynthesis. The sequence is that of Pentafunctional AROM polypeptide from Coccidioides posadasii (strain C735) (Valley fever fungus).